We begin with the raw amino-acid sequence, 296 residues long: Cytidine deaminase (296 aa).

2 consecutive CMP/dCMP-type deaminase domains span residues 47–167 (TESE…FGPK) and 186–296 (DSSD…VDPI). 88–90 (NLE) is a substrate binding site. Residue His-101 coordinates Zn(2+). Catalysis depends on Glu-103, which acts as the Proton donor. Positions 128 and 131 each coordinate Zn(2+).

It belongs to the cytidine and deoxycytidylate deaminase family. In terms of assembly, homodimer. Zn(2+) is required as a cofactor.

It catalyses the reaction cytidine + H2O + H(+) = uridine + NH4(+). The enzyme catalyses 2'-deoxycytidine + H2O + H(+) = 2'-deoxyuridine + NH4(+). Its function is as follows. This enzyme scavenges exogenous and endogenous cytidine and 2'-deoxycytidine for UMP synthesis. The polypeptide is Cytidine deaminase (Shewanella oneidensis (strain ATCC 700550 / JCM 31522 / CIP 106686 / LMG 19005 / NCIMB 14063 / MR-1)).